A 464-amino-acid polypeptide reads, in one-letter code: uncharacterized protein (464 aa).

The next 12 helical transmembrane spans lie at 7–27 (VLNVFSLVMINVIAVDSLRTL), 37–57 (LVFYYIFAALTFFIPVALVAA), 94–114 (VVWYPTMLAFIAATLSYLIAP), 121–141 (FYLLGTALTLFWVFTFLNCFG), 153–173 (ASIGTLLPMIVIIVLGAVWIF), 196–216 (LSLFSAVLFGLIGMEMSAVHA), 231–251 (FYSALLIISTLSLGSLAIVIV), 282–302 (VIAVLIILGGLSGVSAWIIGP), 329–349 (VAILLTQGVIFTVLSTVFILL), 359–379 (LSDLSAQMALLVYIMMFAAAI), 401–421 (MSLISGIGIICCIAAMIVGFI), and 432–452 (FLFECFLIGGLILFVFIPWLF).

Belongs to the amino acid-polyamine-organocation (APC) superfamily.

It localises to the cell membrane. This is an uncharacterized protein from Legionella pneumophila subsp. pneumophila (strain Philadelphia 1 / ATCC 33152 / DSM 7513).